Consider the following 854-residue polypeptide: MTVQTVKILSELVSTPVDKLLAQMKDAGLPQTSASQEVSEVEKQVLLSYLKRQHGEEGDNSQRITLQRKTTSTLSRDGGKAVNVAVKKKRTYVKRDDEEAQKQEELAKRLAEEQERLAQEKARLELERKQEEEKAAKAKAEAEEKARQEAAVKNVVADAGAVNETEQYVSDTGAAEPVESPKQPKASKKVSQPAMDSKKSTVAPKGKKGPVRHDNDKDKDKPRGRVNPDNKRTSRVNVNDEDEFTRRGKLGRKNKKPSKQEHGFQKPTAKMIHEVALPESITVADLAEKMAVKGAEVIKIMFKMGAMATINQTIDRDTATLVVEEMGHTVKFIDENAVENDMIEAIDYQGEAIKRAPVVTVMGHVDHGKTSLLDYIRTTRVAAGESGGITQHIGAYHVETPHGMISFLDTPGHAAFTSMRARGAKATDIVILVCAADDGVMPQTIEAIQHARAAGVPMVVAMTKIDKEGADIDRVKNELVAQEVVPEEWGGDIQFVGVSAKSGEGIEALLEAVLLQAEVLELTAVPSAPAKGVVVEARLDRGRGSVATLLVQNGTLKKGDIVLAGLQMGRVRALLDETGKAIDSAGPSIPVEILGLDGTPEAGEEFIVVADERKAREVANFRQGKYREVRFARQHSAKLENLFSEMGKDEVRTLNVVLKADVRGSLEALIKSLTDMNTDEVKVNVVSSGVGGITETDATLALASDAVIFGFNVRADNSAKQFIERESIDLRYYSVIYNIIDDVKSALSGMLSPDLREDIKGTAEVRDVFRSPKFGLIAGCMVIEGTVYRNKQIRVLRDDVVIYEGELESLRRFKDAVNEVSRGMECGIGVKNYNDVKVGDKIEVFETVEVARTL.

2 disordered regions span residues 52–79 (RQHG…RDGG) and 128–265 (RKQE…HGFQ). The span at 61 to 75 (SQRITLQRKTTSTLS) shows a compositional bias: polar residues. Composition is skewed to basic and acidic residues over residues 128–150 (RKQE…RQEA) and 211–232 (VRHD…DNKR). Positions 247–257 (RGKLGRKNKKP) are enriched in basic residues. One can recognise a tr-type G domain in the interval 354 to 523 (KRAPVVTVMG…LLQAEVLELT (170 aa)). The segment at 363–370 (GHVDHGKT) is G1. 363-370 (GHVDHGKT) provides a ligand contact to GTP. A G2 region spans residues 388 to 392 (GITQH). Residues 409-412 (DTPG) are G3. Residue 409–413 (DTPGH) coordinates GTP. The G4 stretch occupies residues 463-466 (TKID). The interval 499–501 (SAK) is G5.

This sequence belongs to the TRAFAC class translation factor GTPase superfamily. Classic translation factor GTPase family. IF-2 subfamily.

The protein resides in the cytoplasm. In terms of biological role, one of the essential components for the initiation of protein synthesis. Protects formylmethionyl-tRNA from spontaneous hydrolysis and promotes its binding to the 30S ribosomal subunits. Also involved in the hydrolysis of GTP during the formation of the 70S ribosomal complex. In Marinomonas sp. (strain MWYL1), this protein is Translation initiation factor IF-2.